A 119-amino-acid chain; its full sequence is Large ribosomal subunit protein bL20 (119 aa).

It belongs to the bacterial ribosomal protein bL20 family.

Its function is as follows. Binds directly to 23S ribosomal RNA and is necessary for the in vitro assembly process of the 50S ribosomal subunit. It is not involved in the protein synthesizing functions of that subunit. The polypeptide is Large ribosomal subunit protein bL20 (Coxiella burnetii (strain CbuK_Q154) (Coxiella burnetii (strain Q154))).